The sequence spans 141 residues: Hemoglobin subunit alpha-D (141 aa).

One can recognise a Globin domain in the interval 1–141 (MLTEDDKQLI…VSAVLAEKYR (141 aa)). Heme b is bound by residues histidine 58 and histidine 87.

Belongs to the globin family. Heterotetramer of two alpha-D chains and two beta chains. As to expression, red blood cells.

Functionally, involved in oxygen transport from the lung to the various peripheral tissues. The chain is Hemoglobin subunit alpha-D (HBAD) from Chelonoidis niger (Galapagos giant tortoise).